A 343-amino-acid chain; its full sequence is Low conductance mechanosensitive channel YnaI (343 aa).

The Periplasmic portion of the chain corresponds to 1–9; that stretch reads MIAELFTNN. The helical transmembrane segment at 10–30 threads the bilayer; the sequence is ALNLVIIFGSCAALILMSFWF. Residues 31-40 lie on the Cytoplasmic side of the membrane; it reads RRGNRKRKGF. Residues 41–61 traverse the membrane as a helical segment; that stretch reads LFHAVQFLIYTIIISAVGSII. Residues 62–77 lie on the Periplasmic side of the membrane; the sequence is NYVIENYKLKFITPGV. Residues 78–98 form a helical membrane-spanning segment; that stretch reads IDFICTSLIAVILTIKLFLLI. Topologically, residues 99–125 are cytoplasmic; that stretch reads NQFEKQQIKKGRDITSARIMSRIIKIT. The helical transmembrane segment at 126–146 threads the bilayer; that stretch reads IIVVLVLLYGEHFGMSLSGLL. A topological domain (periplasmic) is located at residue Thr147. A helical membrane pass occupies residues 148–168; sequence FGGIGGLAVGMAGKDILSNFF. At 169-343 the chain is on the cytoplasmic side; the sequence is SGIMLYFDRP…DNITPPEQGR (175 aa).

It belongs to the MscS (TC 1.A.23) family. As to quaternary structure, homoheptamer.

The protein localises to the cell inner membrane. Its function is as follows. Mechanosensitive channel that protects cells against hypoosmotic stress when highly overexpressed. This Escherichia coli (strain K12) protein is Low conductance mechanosensitive channel YnaI (ynaI).